Reading from the N-terminus, the 61-residue chain is Conotoxin Vn5.3 (61 aa).

The first 19 residues, 1–19 (MHCLPVFVILLLLIASAPG), serve as a signal peptide directing secretion. Residues 20-50 (VDVQPKTKNFMTRASLRDFAKKTPKRLSKLR) constitute a propeptide that is removed on maturation.

The protein belongs to the conotoxin T superfamily. Contains 2 disulfide bonds that can be either 'C1-C3, C2-C4' or 'C1-C4, C2-C3', since these disulfide connectivities have been observed for conotoxins with cysteine framework V (for examples, see AC P0DQQ7 and AC P81755). Expressed by the venom duct.

The protein localises to the secreted. In Conus ventricosus (Mediterranean cone), this protein is Conotoxin Vn5.3.